Reading from the N-terminus, the 501-residue chain is CaM kinase-like vesicle-associated protein (501 aa).

The Protein kinase domain occupies 24–286 (YDLGQVIKTE…AEEAISHEWI (263 aa)). Residues 327 to 501 (RAPEQSSTAA…AQESQREEAS (175 aa)) form a disordered region. Low complexity predominate over residues 331-365 (QSSTAAAQSASATDTATPGAAGGATAAAASGATSA). Positions 387–428 (TPATDGSATPATDGSVTPATDGSITPATDGSVTPATDRSATP) are enriched in polar residues. Position 435 is a phosphothreonine (Thr435). The span at 438–451 (TEESTVPTTQSSAM) shows a compositional bias: polar residues. The residue at position 459 (Thr459) is a Phosphothreonine.

Belongs to the protein kinase superfamily. CAMK Ser/Thr protein kinase family. As to quaternary structure, interacts with calmodulin, in the presence of calcium. Ca(2+) serves as cofactor.

It localises to the cell membrane. Its subcellular location is the cytoplasmic vesicle membrane. Does not appear to have detectable kinase activity. In Homo sapiens (Human), this protein is CaM kinase-like vesicle-associated protein (CAMKV).